Reading from the N-terminus, the 152-residue chain is Peptide deformylase (152 aa).

Residues C88 and H130 each coordinate Fe cation. The active site involves E131. H134 is a Fe cation binding site.

Belongs to the polypeptide deformylase family. It depends on Fe(2+) as a cofactor.

The catalysed reaction is N-terminal N-formyl-L-methionyl-[peptide] + H2O = N-terminal L-methionyl-[peptide] + formate. In terms of biological role, removes the formyl group from the N-terminal Met of newly synthesized proteins. Requires at least a dipeptide for an efficient rate of reaction. N-terminal L-methionine is a prerequisite for activity but the enzyme has broad specificity at other positions. This Carboxydothermus hydrogenoformans (strain ATCC BAA-161 / DSM 6008 / Z-2901) protein is Peptide deformylase.